The sequence spans 276 residues: Lyso-ornithine lipid O-acyltransferase (276 aa).

The chain crosses the membrane as a helical span at residues 25 to 47 (LALRGGAMALVLMAGLTLHLAVR).

Belongs to the 1-acyl-sn-glycerol-3-phosphate acyltransferase family. OlsA subfamily.

It is found in the membrane. It carries out the reaction a lyso-ornithine lipid + a fatty acyl-[ACP] = an N(2)-[(3R)-3-(acyloxy)acyl]-L-ornithine lipid + holo-[ACP]. The enzyme catalyses a fatty acyl-[ACP] + a 1-acyl-sn-glycero-3-phosphate = a 1,2-diacyl-sn-glycero-3-phosphate + holo-[ACP]. The protein operates within lipid metabolism. It participates in phospholipid metabolism. Functionally, catalyzes the second step in the formation of ornithine lipids, which are phosphorus-free membrane lipids. Uses acyl-acyl carrier protein (acyl-AcpP) as an acyl donor and converts lyso-ornithine lipid (LOL) into ornithine lipid (OL). It can also act as an alternate acyl-sn-glycerol-3-phosphate acyltransferase (AGPAT) to ensure glycerophospholipid production. The chain is Lyso-ornithine lipid O-acyltransferase from Rhodobacter capsulatus (strain ATCC BAA-309 / NBRC 16581 / SB1003).